The following is a 326-amino-acid chain: Lipoyl synthase (326 aa).

[4Fe-4S] cluster contacts are provided by Cys74, Cys79, Cys85, Cys100, Cys104, Cys107, and Ser314. Residues 85–303 (CFGKGTATFM…EEEAYKMGFT (219 aa)) form the Radical SAM core domain.

Belongs to the radical SAM superfamily. Lipoyl synthase family. The cofactor is [4Fe-4S] cluster.

It localises to the cytoplasm. The catalysed reaction is [[Fe-S] cluster scaffold protein carrying a second [4Fe-4S](2+) cluster] + N(6)-octanoyl-L-lysyl-[protein] + 2 oxidized [2Fe-2S]-[ferredoxin] + 2 S-adenosyl-L-methionine + 4 H(+) = [[Fe-S] cluster scaffold protein] + N(6)-[(R)-dihydrolipoyl]-L-lysyl-[protein] + 4 Fe(3+) + 2 hydrogen sulfide + 2 5'-deoxyadenosine + 2 L-methionine + 2 reduced [2Fe-2S]-[ferredoxin]. The protein operates within protein modification; protein lipoylation via endogenous pathway; protein N(6)-(lipoyl)lysine from octanoyl-[acyl-carrier-protein]: step 2/2. In terms of biological role, catalyzes the radical-mediated insertion of two sulfur atoms into the C-6 and C-8 positions of the octanoyl moiety bound to the lipoyl domains of lipoate-dependent enzymes, thereby converting the octanoylated domains into lipoylated derivatives. This Delftia acidovorans (strain DSM 14801 / SPH-1) protein is Lipoyl synthase.